The sequence spans 578 residues: Proline--tRNA ligase (578 aa).

The protein belongs to the class-II aminoacyl-tRNA synthetase family. ProS type 1 subfamily. Homodimer.

It localises to the cytoplasm. The catalysed reaction is tRNA(Pro) + L-proline + ATP = L-prolyl-tRNA(Pro) + AMP + diphosphate. In terms of biological role, catalyzes the attachment of proline to tRNA(Pro) in a two-step reaction: proline is first activated by ATP to form Pro-AMP and then transferred to the acceptor end of tRNA(Pro). As ProRS can inadvertently accommodate and process non-cognate amino acids such as alanine and cysteine, to avoid such errors it has two additional distinct editing activities against alanine. One activity is designated as 'pretransfer' editing and involves the tRNA(Pro)-independent hydrolysis of activated Ala-AMP. The other activity is designated 'posttransfer' editing and involves deacylation of mischarged Ala-tRNA(Pro). The misacylated Cys-tRNA(Pro) is not edited by ProRS. The chain is Proline--tRNA ligase from Paraburkholderia xenovorans (strain LB400).